Consider the following 316-residue polypeptide: 4-hydroxy-3-methylbut-2-enyl diphosphate reductase (316 aa).

[4Fe-4S] cluster is bound at residue Cys12. The (2E)-4-hydroxy-3-methylbut-2-enyl diphosphate site is built by His41 and His74. Residues His41 and His74 each coordinate dimethylallyl diphosphate. 2 residues coordinate isopentenyl diphosphate: His41 and His74. Cys96 provides a ligand contact to [4Fe-4S] cluster. His124 is a binding site for (2E)-4-hydroxy-3-methylbut-2-enyl diphosphate. His124 is a binding site for dimethylallyl diphosphate. His124 is an isopentenyl diphosphate binding site. The Proton donor role is filled by Glu126. A (2E)-4-hydroxy-3-methylbut-2-enyl diphosphate-binding site is contributed by Thr169. Position 199 (Cys199) interacts with [4Fe-4S] cluster. (2E)-4-hydroxy-3-methylbut-2-enyl diphosphate-binding residues include Ser227, Ser228, Asn229, and Ser271. Residues Ser227, Ser228, Asn229, and Ser271 each contribute to the dimethylallyl diphosphate site. Isopentenyl diphosphate-binding residues include Ser227, Ser228, Asn229, and Ser271.

It belongs to the IspH family. It depends on [4Fe-4S] cluster as a cofactor.

The enzyme catalyses isopentenyl diphosphate + 2 oxidized [2Fe-2S]-[ferredoxin] + H2O = (2E)-4-hydroxy-3-methylbut-2-enyl diphosphate + 2 reduced [2Fe-2S]-[ferredoxin] + 2 H(+). The catalysed reaction is dimethylallyl diphosphate + 2 oxidized [2Fe-2S]-[ferredoxin] + H2O = (2E)-4-hydroxy-3-methylbut-2-enyl diphosphate + 2 reduced [2Fe-2S]-[ferredoxin] + 2 H(+). It functions in the pathway isoprenoid biosynthesis; dimethylallyl diphosphate biosynthesis; dimethylallyl diphosphate from (2E)-4-hydroxy-3-methylbutenyl diphosphate: step 1/1. Its pathway is isoprenoid biosynthesis; isopentenyl diphosphate biosynthesis via DXP pathway; isopentenyl diphosphate from 1-deoxy-D-xylulose 5-phosphate: step 6/6. Its function is as follows. Catalyzes the conversion of 1-hydroxy-2-methyl-2-(E)-butenyl 4-diphosphate (HMBPP) into a mixture of isopentenyl diphosphate (IPP) and dimethylallyl diphosphate (DMAPP). Acts in the terminal step of the DOXP/MEP pathway for isoprenoid precursor biosynthesis. This chain is 4-hydroxy-3-methylbut-2-enyl diphosphate reductase, found in Stenotrophomonas maltophilia (strain K279a).